The following is a 57-amino-acid chain: MQYAFSFSFWADIEYPSFACSSVETLTYIPTFFGVFSSIKFMIIYPPFLETYVLFSG.

This is an uncharacterized protein from Bacillus phage phi105 (Bacteriophage phi-105).